A 264-amino-acid chain; its full sequence is Thymidylate synthase (264 aa).

Arginine 21 lines the dUMP pocket. Position 51 (histidine 51) interacts with (6R)-5,10-methylene-5,6,7,8-tetrahydrofolate. A dUMP-binding site is contributed by arginine 126–arginine 127. The active-site Nucleophile is cysteine 146. DUMP contacts are provided by residues arginine 166 to aspartate 169, asparagine 177, and histidine 207 to tyrosine 209. (6R)-5,10-methylene-5,6,7,8-tetrahydrofolate is bound at residue aspartate 169. Position 263 (alanine 263) interacts with (6R)-5,10-methylene-5,6,7,8-tetrahydrofolate.

It belongs to the thymidylate synthase family. Bacterial-type ThyA subfamily. Homodimer.

It is found in the cytoplasm. The enzyme catalyses dUMP + (6R)-5,10-methylene-5,6,7,8-tetrahydrofolate = 7,8-dihydrofolate + dTMP. The protein operates within pyrimidine metabolism; dTTP biosynthesis. Its function is as follows. Catalyzes the reductive methylation of 2'-deoxyuridine-5'-monophosphate (dUMP) to 2'-deoxythymidine-5'-monophosphate (dTMP) while utilizing 5,10-methylenetetrahydrofolate (mTHF) as the methyl donor and reductant in the reaction, yielding dihydrofolate (DHF) as a by-product. This enzymatic reaction provides an intracellular de novo source of dTMP, an essential precursor for DNA biosynthesis. This chain is Thymidylate synthase, found in Shewanella oneidensis (strain ATCC 700550 / JCM 31522 / CIP 106686 / LMG 19005 / NCIMB 14063 / MR-1).